We begin with the raw amino-acid sequence, 292 residues long: Protoheme IX farnesyltransferase (292 aa).

The next 9 membrane-spanning stretches (helical) occupy residues 13–33 (ILFGNFITTLGGFFLAAQGHV), 35–55 (FLLLILTLLGTTFVVASGCVV), 84–104 (TALIFAFILGIIGFGILWFWV), 106–126 (PYSFSFAIIGFVVYVGFYSLW), 135–155 (TIIGSISGASPPVIGYTAVTH), 161–181 (ALLIFLAYGLWQMPHSWAIAI), 206–226 (VECLIYIVLFAAVLNGLYCFG), 231–251 (FFLLTFNVLTAYWLYLSIIGF), and 263–283 (LFLFSVILITLLSLSFSFTYQ).

This sequence belongs to the UbiA prenyltransferase family. Protoheme IX farnesyltransferase subfamily.

The protein resides in the cell inner membrane. The enzyme catalyses heme b + (2E,6E)-farnesyl diphosphate + H2O = Fe(II)-heme o + diphosphate. It participates in porphyrin-containing compound metabolism; heme O biosynthesis; heme O from protoheme: step 1/1. Functionally, converts heme B (protoheme IX) to heme O by substitution of the vinyl group on carbon 2 of heme B porphyrin ring with a hydroxyethyl farnesyl side group. This is Protoheme IX farnesyltransferase from Acinetobacter baylyi (strain ATCC 33305 / BD413 / ADP1).